A 253-amino-acid chain; its full sequence is Spermatogenesis-associated protein 9 (253 aa).

The helical transmembrane segment at 144–166 threads the bilayer; it reads LTSIMCASYAALIYLTVCVNAVL. Residues 210-228 show a composition bias toward basic and acidic residues; sequence AKPYRSLPEKPDSISDRPK. The tract at residues 210-231 is disordered; the sequence is AKPYRSLPEKPDSISDRPKLPA.

It localises to the membrane. May play at role in testicular development/spermatogenesis and may be an important factor in male infertility. This chain is Spermatogenesis-associated protein 9 (SPATA9), found in Bos taurus (Bovine).